The following is a 363-amino-acid chain: Inactive CLIP domain-containing serine protease A8 (363 aa).

An N-terminal signal peptide occupies residues 1–25 (MPSWWCCCCLVVLLYAQRMIVPSSA). In terms of domain architecture, Clip spans 33 to 82 (LQECPGGFCSPKYLCPNGTYNEANAQNQEIIMLRFGEEDVCQDYMQVCCS). Cystine bridges form between Cys-36-Cys-80, Cys-41-Cys-73, and Cys-47-Cys-81. N-linked (GlcNAc...) asparagine glycosylation is found at Asn-49, Asn-83, Asn-117, and Asn-166. Residues 114 to 360 (VEGNRTYAQY…FVTWINATIE (247 aa)) form the Peptidase S1 domain. 3 cysteine pairs are disulfide-bonded: Cys-245-Cys-317, Cys-276-Cys-297, and Cys-307-Cys-336. Residues Asn-319 and Asn-356 are each glycosylated (N-linked (GlcNAc...) asparagine).

The protein belongs to the peptidase S1 family. CLIP subfamily. As to quaternary structure, heterodimer of a light chain and a heavy chain; disulfide-linked. In terms of processing, secreted as a full-length protein. Proteolytically cleaved into two chains which remain covalently linked. Cleavage is induced by Gram-positive or Gram-negative bacteria infection.

The protein resides in the secreted. Functionally, inactive serine protease which plays an essential role in the innate immune response against bacteria, fungi and protozoa infection by activating the melanization cascade. In the melanization cascade, acts downstream of TEP1 and SPCLIP1 to promote CLIPA28 and CLIPC9 proteolytic cleavage and CLIPC9 recruitment to microbial surfaces. In the resistant strain L3-5, required for the melanization of killed parasite P.berghei ookinetes which results in their clearance. In the susceptible strain G3, appears to be dispensable for ookinete elimination which occurs by lysis. Required for the melanization of Gram-positive and Gram-negative bacteria. During the late stage of fungus B.bassiana-mediated infection, required for the initiation of hyphae melanization by promoting prophenoloxidase PPO activation. The protein is Inactive CLIP domain-containing serine protease A8 of Anopheles gambiae (African malaria mosquito).